Here is a 462-residue protein sequence, read N- to C-terminus: NADH-quinone oxidoreductase subunit N 1 (462 aa).

Helical transmembrane passes span 4 to 24, 32 to 52, 60 to 80, 88 to 108, 113 to 133, 148 to 168, 178 to 198, 220 to 240, 251 to 271, 279 to 299, 307 to 327, 351 to 371, 374 to 394, 416 to 436, and 439 to 459; these read FVVAYFPHLCLAFGGLLVLCL, AGFYPATAALFAALPGLWAVA, IACFYAGLLSVIALATIALLA, FAGDALYGLLLWSALGMLLLA, WIMLAVGLELASLCLYALIAA, FLPGAMALAVLLFGMALIYAA, LAAPGPLTAAGLALVLVGVGF, VAAFLSSGSKAAAAAALLHVC, LWPALAVGAGLTMAVGNLGAV, LLAYSSIAQMGYILMAAMAVN, LFYLAAFALMDLAAFGAVGAL, AGVLAIGLASLAGLPPTAGFV, FLVFGAALSAGYVGLAAFGII, LIAHPAAVYAAGPAGTLALGV, and AGLVGLGLFPQTLLGAIAALF.

Belongs to the complex I subunit 2 family. As to quaternary structure, NDH-1 is composed of 14 different subunits. Subunits NuoA, H, J, K, L, M, N constitute the membrane sector of the complex.

It is found in the cell inner membrane. It carries out the reaction a quinone + NADH + 5 H(+)(in) = a quinol + NAD(+) + 4 H(+)(out). NDH-1 shuttles electrons from NADH, via FMN and iron-sulfur (Fe-S) centers, to quinones in the respiratory chain. The immediate electron acceptor for the enzyme in this species is believed to be ubiquinone. Couples the redox reaction to proton translocation (for every two electrons transferred, four hydrogen ions are translocated across the cytoplasmic membrane), and thus conserves the redox energy in a proton gradient. In Solidesulfovibrio magneticus (strain ATCC 700980 / DSM 13731 / RS-1) (Desulfovibrio magneticus), this protein is NADH-quinone oxidoreductase subunit N 1.